The chain runs to 247 residues: Acetoacetate decarboxylase 1 (247 aa).

Lysine 116 serves as the catalytic Schiff-base intermediate with acetoacetate.

The protein belongs to the ADC family.

It carries out the reaction acetoacetate + H(+) = acetone + CO2. Its function is as follows. Catalyzes the conversion of acetoacetate to acetone and carbon dioxide. This is Acetoacetate decarboxylase 1 from Mesorhizobium japonicum (strain LMG 29417 / CECT 9101 / MAFF 303099) (Mesorhizobium loti (strain MAFF 303099)).